A 220-amino-acid polypeptide reads, in one-letter code: MOB kinase activator-like 3 (220 aa).

Positions 83, 88, 165, and 170 each coordinate Zn(2+).

The protein belongs to the MOB1/phocein family.

The sequence is that of MOB kinase activator-like 3 (Mob3) from Drosophila melanogaster (Fruit fly).